The chain runs to 305 residues: Glycine--tRNA ligase alpha subunit (305 aa).

This sequence belongs to the class-II aminoacyl-tRNA synthetase family. In terms of assembly, tetramer of two alpha and two beta subunits.

It is found in the cytoplasm. The enzyme catalyses tRNA(Gly) + glycine + ATP = glycyl-tRNA(Gly) + AMP + diphosphate. The protein is Glycine--tRNA ligase alpha subunit of Streptococcus pyogenes serotype M49 (strain NZ131).